Reading from the N-terminus, the 623-residue chain is Kelch repeat and BTB domain-containing protein 11 (623 aa).

The disordered stretch occupies residues 1 to 129; sequence MEHAVAPCVL…PEEPGEPAPV (129 aa). Over residues 12–31 the composition is skewed to low complexity; the sequence is PGTEPGAAGESESEGAASPA. A compositionally biased stretch (polar residues) spans 42–55; sequence CFSSGEESPPQSLA. Phosphoserine occurs at positions 64, 67, 87, and 107. The span at 79-91 shows a compositional bias: low complexity; sequence EAGSAGAASPEEL. In terms of domain architecture, BTB spans 140–196; sequence PDLVLEVSGRRLRAHKAVLAARSDYFRARASRDVLRVQGVSLTALRLLLADAYSGRM. Kelch repeat units lie at residues 311-359, 360-412, 413-455, and 458-500; these read RPQS…VLYN, YLFV…ALDG, HLYA…ATTC, and EIYV…ALDG.

In Homo sapiens (Human), this protein is Kelch repeat and BTB domain-containing protein 11 (KBTBD11).